Here is a 337-residue protein sequence, read N- to C-terminus: Anthranilate phosphoribosyltransferase (337 aa).

5-phospho-alpha-D-ribose 1-diphosphate-binding positions include glycine 81, 84-85, serine 89, 91-94, 109-117, and alanine 121; these read GD, NVST, and KHGNRAATS. Glycine 81 contributes to the anthranilate binding site. Residue serine 93 participates in Mg(2+) binding. Residue asparagine 112 participates in anthranilate binding. Arginine 167 contributes to the anthranilate binding site. Positions 226 and 227 each coordinate Mg(2+).

It belongs to the anthranilate phosphoribosyltransferase family. As to quaternary structure, homodimer. Mg(2+) serves as cofactor.

The catalysed reaction is N-(5-phospho-beta-D-ribosyl)anthranilate + diphosphate = 5-phospho-alpha-D-ribose 1-diphosphate + anthranilate. The protein operates within amino-acid biosynthesis; L-tryptophan biosynthesis; L-tryptophan from chorismate: step 2/5. In terms of biological role, catalyzes the transfer of the phosphoribosyl group of 5-phosphorylribose-1-pyrophosphate (PRPP) to anthranilate to yield N-(5'-phosphoribosyl)-anthranilate (PRA). The sequence is that of Anthranilate phosphoribosyltransferase from Methylorubrum populi (strain ATCC BAA-705 / NCIMB 13946 / BJ001) (Methylobacterium populi).